Reading from the N-terminus, the 543-residue chain is Phosphatidylinositol/phosphatidylcholine transfer protein SFH12 (543 aa).

Positions 120-294 constitute a CRAL-TRIO domain; that stretch reads EIDEVLKYYP…FLGGSCTCAD (175 aa). Positions 316 to 356 are disordered; it reads HNGDHKCSKGSQAENSGEKTIPEEDDSTTEPASEEEKASKE. A coiled-coil region spans residues 490–526; that stretch reads DKEEMLNAAISRSNVLEQELAATKKALDDSLGRQEEL.

The protein belongs to the SFH family. As to expression, specifically expressed in flowers.

The protein resides in the golgi apparatus membrane. It localises to the cell membrane. Required for transport of secretory proteins from the Golgi complex. Catalyzes the transfer of phosphatidylinositol and phosphatidylcholine between membranes in vitro. In Arabidopsis thaliana (Mouse-ear cress), this protein is Phosphatidylinositol/phosphatidylcholine transfer protein SFH12 (SFH12).